A 371-amino-acid chain; its full sequence is MPHHYVLTLFGLLPVATNISTWWNFGSMLLTCLALQVLTGFFLAVHYTANINLAFSSIVHITRDVPYGWMMQNLHAIGASMFFICIYIHIARGLYYGSYLNKETWMSGITLLITLMATAFFGYVLPWGQMSFWAATVITNLLTAVPYLGTSLTTWLWGGFAINDPTLTRFFALHFILPFAIISLSSLHVILLHEEGSSNPLGTNPDIDKIPFHPYHSHKDLLLLTLMMMFLFIIVSFFPDIFNDPDNFSKANPLVTPQHIKPEWYFLFAYGILRSIPNKLGGALALVMSIMILFCTPFTHTAHLRPMTFRPLSQLMFWTLVSTFITITWAATKPVEPPFITISQVTSILYFTFFLSIPILGWVENKIMNAP.

4 helical membrane-spanning segments follow: residues 25–45 (FGSM…FLAV), 69–90 (WMMQ…YIHI), 105–125 (WMSG…GYVL), and 170–190 (FFAL…LHVI). Heme b contacts are provided by histidine 75 and histidine 89. Residues histidine 174 and histidine 188 each coordinate heme b. Histidine 193 provides a ligand contact to a ubiquinone. 4 helical membrane-spanning segments follow: residues 218–238 (HKDL…VSFF), 280–300 (LGGA…PFTH), 312–332 (LSQL…WAAT), and 339–358 (FITI…LSIP).

It belongs to the cytochrome b family. As to quaternary structure, the cytochrome bc1 complex contains 3 respiratory subunits (MT-CYB, CYC1 and UQCRFS1), 2 core proteins (UQCRC1 and UQCRC2) and probably 6 low-molecular weight proteins. It depends on heme b as a cofactor.

It is found in the mitochondrion inner membrane. Its function is as follows. Component of the ubiquinol-cytochrome c reductase complex (complex III or cytochrome b-c1 complex) that is part of the mitochondrial respiratory chain. The b-c1 complex mediates electron transfer from ubiquinol to cytochrome c. Contributes to the generation of a proton gradient across the mitochondrial membrane that is then used for ATP synthesis. This chain is Cytochrome b (MT-CYB), found in Liasis mackloti savuensis (Savu python).